Consider the following 275-residue polypeptide: NH(3)-dependent NAD(+) synthetase (275 aa).

ATP is bound at residue 46-53; sequence GISGGQDS. Asp52 lines the Mg(2+) pocket. Residue Arg140 coordinates deamido-NAD(+). Thr160 serves as a coordination point for ATP. Glu165 contacts Mg(2+). Deamido-NAD(+) is bound by residues Lys173 and Asp180. The ATP site is built by Lys189 and Thr211. A deamido-NAD(+)-binding site is contributed by 260–261; that stretch reads HK.

Belongs to the NAD synthetase family. Homodimer.

The enzyme catalyses deamido-NAD(+) + NH4(+) + ATP = AMP + diphosphate + NAD(+) + H(+). It participates in cofactor biosynthesis; NAD(+) biosynthesis; NAD(+) from deamido-NAD(+) (ammonia route): step 1/1. Catalyzes the ATP-dependent amidation of deamido-NAD to form NAD. Uses ammonia as a nitrogen source. This chain is NH(3)-dependent NAD(+) synthetase, found in Salmonella paratyphi A (strain ATCC 9150 / SARB42).